The following is a 692-amino-acid chain: ATP-dependent RNA helicase MSS116, mitochondrial (692 aa).

A mitochondrion-targeting transit peptide spans 1–37 (MMIARFGKQVLRKNVLVSNRIHFPVISRGFHNSFINK). Residues 82 to 113 (SQVTEQTELTKSEEEEKKKKNINTNTNKNDRK) form a disordered region. Residues 89 to 99 (ELTKSEEEEKK) are compositionally biased toward basic and acidic residues. Positions 130-158 (DFKNTGLIDDVILRALDRAHFKDLTPIQQ) match the Q motif motif. Residues 162-349 (VPLLETERGM…KQHINKKYDY (188 aa)) enclose the Helicase ATP-binding domain. 175–182 (AKTGTGKT) lines the ATP pocket. The short motif at 290-293 (DEAD) is the DEAD box element. The region spanning 384–534 (YVNQLVKDSP…QVHESSEIDN (151 aa)) is the Helicase C-terminal domain. The tract at residues 643–692 (NRYSGGGGNRSEKRFSFAGRGGNSGGHSGRGRGGRSGYSGGRSSQYSDWE) is disordered. Over residues 661-670 (GRGGNSGGHS) the composition is skewed to gly residues.

It belongs to the DEAD box helicase family. DDX18/HAS1 subfamily.

Its subcellular location is the mitochondrion matrix. It carries out the reaction ATP + H2O = ADP + phosphate + H(+). Its function is as follows. ATP-dependent RNA helicase required for mitochondrial splicing of group I and II introns. Also required for efficient mitochondrial translation. The polypeptide is ATP-dependent RNA helicase MSS116, mitochondrial (MSS116) (Lodderomyces elongisporus (strain ATCC 11503 / CBS 2605 / JCM 1781 / NBRC 1676 / NRRL YB-4239) (Yeast)).